A 248-amino-acid polypeptide reads, in one-letter code: DNA repair protein RecO (248 aa).

It belongs to the RecO family.

Functionally, involved in DNA repair and RecF pathway recombination. This is DNA repair protein RecO from Bacillus cereus (strain B4264).